Reading from the N-terminus, the 379-residue chain is Homoserine O-succinyltransferase (379 aa).

The region spanning 51-360 (NAVLICHALS…DSPYGHDAFL (310 aa)) is the AB hydrolase-1 domain. Ser157 serves as the catalytic Nucleophile. A substrate-binding site is contributed by Arg227. Catalysis depends on residues Asp323 and His356. Residue Asp357 coordinates substrate.

This sequence belongs to the AB hydrolase superfamily. MetX family. Homodimer.

The protein localises to the cytoplasm. It catalyses the reaction L-homoserine + succinyl-CoA = O-succinyl-L-homoserine + CoA. The protein operates within amino-acid biosynthesis; L-methionine biosynthesis via de novo pathway; O-succinyl-L-homoserine from L-homoserine: step 1/1. Functionally, transfers a succinyl group from succinyl-CoA to L-homoserine, forming succinyl-L-homoserine. The sequence is that of Homoserine O-succinyltransferase from Pseudomonas putida (strain W619).